We begin with the raw amino-acid sequence, 128 residues long: Ribonuclease P protein component (128 aa).

It belongs to the RnpA family. As to quaternary structure, consists of a catalytic RNA component (M1 or rnpB) and a protein subunit.

It carries out the reaction Endonucleolytic cleavage of RNA, removing 5'-extranucleotides from tRNA precursor.. Functionally, RNaseP catalyzes the removal of the 5'-leader sequence from pre-tRNA to produce the mature 5'-terminus. It can also cleave other RNA substrates such as 4.5S RNA. The protein component plays an auxiliary but essential role in vivo by binding to the 5'-leader sequence and broadening the substrate specificity of the ribozyme. The sequence is that of Ribonuclease P protein component from Methylococcus capsulatus (strain ATCC 33009 / NCIMB 11132 / Bath).